The sequence spans 369 residues: Secondary metabolism regulator laeA (369 aa).

A disordered region spans residues 1–37 (MFGNGQTGQRLPAMASPPHDSYYSQSLASSRSRNNSD). The span at 20–37 (DSYYSQSLASSRSRNNSD) shows a compositional bias: low complexity.

It belongs to the methyltransferase superfamily. LaeA methyltransferase family. In terms of assembly, component of the heterotrimeric velvet complex composed of laeA, veA and velB; VeA acting as a bridging protein between laeA and velB. Interacts directly with veA.

It localises to the nucleus. The catalysed reaction is L-methionyl-[protein] + S-adenosyl-L-methionine = S-methyl-L-methionyl-[protein] + S-adenosyl-L-homocysteine. Methyltransferase that performs automethylation. No other methyl-accepting substrate has been identified yet. Component of the velvet transcription factor complex that acts as a global regulator for secondary metabolite gene expression. Required for aflR expression and subsequent aflatoxin production. Negatively regulates veA expression. Controls conidiophore and conidial development. Required for hydrophobin production which plays a role in cell surface hydrophobicity and host defense escape. In Aspergillus flavus (strain ATCC 200026 / FGSC A1120 / IAM 13836 / NRRL 3357 / JCM 12722 / SRRC 167), this protein is Secondary metabolism regulator laeA.